We begin with the raw amino-acid sequence, 2556 residues long: Ubiquitin carboxyl-terminal hydrolase 9Y (2556 aa).

Polar residues predominate over residues 1-33; it reads MTITTRGSPVGENESQGQTSDGQPQPSFQQNQI. Positions 1–68 are disordered; that stretch reads MTITTRGSPV…QHEEEDPSFP (68 aa). A compositionally biased stretch (low complexity) spans 34–44; it reads SSSDSSNETSP. Serine 587 carries the phosphoserine modification. Threonine 589 bears the Phosphothreonine mark. Positions 971–999 are disordered; the sequence is NMPSSPDSSSDSSAGPPGNHSHNNYRDVS. A compositionally biased stretch (low complexity) spans 973–983; it reads PSSPDSSSDSS. The region spanning 1559-1958 is the USP domain; that stretch reads VGLKNAGATC…NAYILFYERM (400 aa). Residue cysteine 1568 is the Nucleophile of the active site. Zn(2+)-binding residues include cysteine 1729, histidine 1731, cysteine 1773, and cysteine 1776. The active-site Proton acceptor is histidine 1881. Position 2447 is a phosphoserine (serine 2447). Residues 2513–2556 are disordered; sequence QNYVPEQPFSGPASHHLNNPQKNDKPQETHESNEEISSCLIKDQ. The span at 2534–2545 shows a compositional bias: basic and acidic residues; the sequence is KNDKPQETHESN. At serine 2549 the chain carries Phosphoserine.

Belongs to the peptidase C19 family.

The enzyme catalyses Thiol-dependent hydrolysis of ester, thioester, amide, peptide and isopeptide bonds formed by the C-terminal Gly of ubiquitin (a 76-residue protein attached to proteins as an intracellular targeting signal).. Its pathway is protein modification; protein ubiquitination. Its function is as follows. Deubiquitinase that mediates deubiquitination of target proteins. May stabilize target proteins that are important for male germ cell development. The sequence is that of Ubiquitin carboxyl-terminal hydrolase 9Y from Mus musculus (Mouse).